Here is a 132-residue protein sequence, read N- to C-terminus: Chemokine-like protein TAFA-5 (132 aa).

Residues 1-43 (MAPSPRTGSRQDATALPSMSSTFWAFMILASLLIAYCSQLAAG) form the signal peptide. An N-linked (GlcNAc...) asparagine glycan is attached at asparagine 113.

The protein belongs to the TAFA family.

The protein resides in the secreted. In terms of biological role, acts as a chemokine-like protein by regulating cell proliferation and migration through activation of G protein-coupled receptors (GPCRs), such as S1PR2 and FPR2. Stimulates chemotactic migration of macrophages mediated by the MAPK3/ERK1 and AKT1 pathway. Blocks TNFSF11/RANKL-induced osteoclast formation from macrophages by inhibiting up-regulation of osteoclast fusogenic and differentiation genes. Stimulation of macrophage migration and inhibition of osteoclast formation is mediated through the GPCR FPR2. Acts as an adipokine by negatively regulating vascular smooth muscle cell (VSMC) proliferation and migration in response to platelet-derived growth factor stimulation via GPCR S1PR2 and G protein GNA12/GNA13-transmitted RHOA signaling. Inhibits injury-induced cell proliferation and neointima formation in the femoral arteries. The chain is Chemokine-like protein TAFA-5 (TAFA5) from Bos taurus (Bovine).